Here is a 117-residue protein sequence, read N- to C-terminus: DNA-directed RNA polymerase subunit omega (117 aa).

Belongs to the RNA polymerase subunit omega family. As to quaternary structure, the RNAP catalytic core consists of 2 alpha, 1 beta, 1 beta' and 1 omega subunit. When a sigma factor is associated with the core the holoenzyme is formed, which can initiate transcription.

The catalysed reaction is RNA(n) + a ribonucleoside 5'-triphosphate = RNA(n+1) + diphosphate. In terms of biological role, promotes RNA polymerase assembly. Latches the N- and C-terminal regions of the beta' subunit thereby facilitating its interaction with the beta and alpha subunits. The polypeptide is DNA-directed RNA polymerase subunit omega (Cereibacter sphaeroides (strain ATCC 17025 / ATH 2.4.3) (Rhodobacter sphaeroides)).